Reading from the N-terminus, the 204-residue chain is Probable nicotinate-nucleotide adenylyltransferase (204 aa).

It belongs to the NadD family.

It carries out the reaction nicotinate beta-D-ribonucleotide + ATP + H(+) = deamido-NAD(+) + diphosphate. Its pathway is cofactor biosynthesis; NAD(+) biosynthesis; deamido-NAD(+) from nicotinate D-ribonucleotide: step 1/1. Catalyzes the reversible adenylation of nicotinate mononucleotide (NaMN) to nicotinic acid adenine dinucleotide (NaAD). The protein is Probable nicotinate-nucleotide adenylyltransferase of Mycolicibacterium gilvum (strain PYR-GCK) (Mycobacterium gilvum (strain PYR-GCK)).